We begin with the raw amino-acid sequence, 524 residues long: Nif-specific regulatory protein (524 aa).

The segment at M1–P182 is a domain. The GAF domain maps to E35–I176. Residues M212–E481 form the Sigma-54 factor interaction domain. ATP contacts are provided by residues G240–E247 and A303–E312. The tract at residues R482–L524 is C-terminal DNA-binding domain. The segment at residues Q496–Q515 is a DNA-binding region (H-T-H motif).

As to quaternary structure, interacts with sigma-54.

Required for activation of most nif operons, which are directly involved in nitrogen fixation. The polypeptide is Nif-specific regulatory protein (nifA) (Klebsiella pneumoniae).